The sequence spans 84 residues: uncharacterized protein (84 aa).

In terms of domain architecture, 2Fe-2S ferredoxin-type spans 2 to 84 (ARVTLRITGT…RAKGDIEIEM (83 aa)). [2Fe-2S] cluster contacts are provided by Cys-37, Cys-42, Cys-45, and Cys-74.

The cofactor is [2Fe-2S] cluster.

This is an uncharacterized protein from Escherichia coli O6:H1 (strain CFT073 / ATCC 700928 / UPEC).